The following is a 200-amino-acid chain: Nucleoside triphosphate pyrophosphatase (200 aa).

D79 acts as the Proton acceptor in catalysis.

Belongs to the Maf family. The cofactor is a divalent metal cation.

Its subcellular location is the cytoplasm. It carries out the reaction a ribonucleoside 5'-triphosphate + H2O = a ribonucleoside 5'-phosphate + diphosphate + H(+). The catalysed reaction is a 2'-deoxyribonucleoside 5'-triphosphate + H2O = a 2'-deoxyribonucleoside 5'-phosphate + diphosphate + H(+). Its function is as follows. Nucleoside triphosphate pyrophosphatase. May have a dual role in cell division arrest and in preventing the incorporation of modified nucleotides into cellular nucleic acids. In Legionella pneumophila (strain Paris), this protein is Nucleoside triphosphate pyrophosphatase.